The primary structure comprises 191 residues: Thymidylate kinase (191 aa).

G7–S14 is a binding site for ATP.

It belongs to the thymidylate kinase family.

The enzyme catalyses dTMP + ATP = dTDP + ADP. In terms of biological role, phosphorylation of dTMP to form dTDP in both de novo and salvage pathways of dTTP synthesis. The protein is Thymidylate kinase of Helicobacter pylori (strain HPAG1).